The chain runs to 609 residues: Adagio protein 1 (609 aa).

Over residues 1–17 (MEWDSGSDLSADDASSL) the composition is skewed to low complexity. A disordered region spans residues 1-24 (MEWDSGSDLSADDASSLADDEEGG). The region spanning 32–114 (IPYPVGNLLH…SEIRKCIDEG (83 aa)) is the PAS domain. Cys82 is subject to S-4a-FMN cysteine. One can recognise a PAC domain in the interval 118 to 161 (QGELLNFRKDGSPLMNRLRLTPIYGDDDTITHIIGIQFFIETDI). Positions 195 to 241 (CGLFQLSDEVVSMKILSRLTPRDVASVSSVCRRLYVLTKNEDLWRRV) constitute an F-box domain. Kelch repeat units follow at residues 292-342 (SRCN…SSPP), 345-392 (RWGH…SGLA), 397-445 (RSWH…PAAW), 450-501 (RLGH…TGSG), and 516-564 (RLDH…NIPG).

The protein belongs to the ADAGIO family. As to quaternary structure, interacts with NFXL2. Interacts (via N-terminus) with GI and (via Kelch repeats) with ADO3. Component of an E3 ubiquitin ligase SCF(ADO1) complex composed of SKP1A/ASK1 (or SKP1B/ASK2), CUL1, RBX1 and ADO1. Also interacts with SKP1D/ASK4, SKP1K/ASK11, CRY1, PHYB, APRR1 and APRR5, and probably with SKP1N/ASK14 and SKP1S/ASK19. Post-translationally, may be ubiquitinated. Degraded in a proteasome-dependent manner. In terms of processing, FMN binds covalently to cysteine after exposure to blue light and is reversed in the dark. In terms of tissue distribution, ubiquitously expressed with higher levels in cotyledons and leaves.

It is found in the nucleus. The protein resides in the cytoplasm. It functions in the pathway protein modification; protein ubiquitination. Component of an E3 ubiquitin ligase complex that plays a central role in blue light-dependent circadian cycles. Acts as a blue light photoreceptor, due to the presence of FMN, that mediates light-regulated protein degradation of critical clock components by targeting them to the proteasome complex. The SCF(ADO1) E3 ubiquitin ligase complex is involved in the regulation of circadian clock-dependent processes including the transition to flowering time, hypocotyl elongation, cotyledons and leaf movement rhythms. APRR1/TOC1 and APRR5, but not 'GIGANTEA', are proteolytic substrates of this ubiquitin ligase complex. Blue light enhances cooperative stabilization of 'GIGANTEA' and ADO1/ZTL, leading to amplification and sharpening of the expression profile of APRR1/TOC1. ADO1/ZTL interacts with ADO3, preventing the interaction of ADO3 with CDF1. The polypeptide is Adagio protein 1 (ADO1) (Arabidopsis thaliana (Mouse-ear cress)).